The primary structure comprises 376 residues: Erythronate-4-phosphate dehydrogenase (376 aa).

Substrate is bound by residues Ser45 and Thr67. Position 147 (Asp147) interacts with NAD(+). Residue Arg209 is part of the active site. Asp233 lines the NAD(+) pocket. Glu238 is a catalytic residue. The Proton donor role is filled by His255. Gly258 contributes to the NAD(+) binding site. Tyr259 lines the substrate pocket.

Belongs to the D-isomer specific 2-hydroxyacid dehydrogenase family. PdxB subfamily. Homodimer.

It localises to the cytoplasm. It catalyses the reaction 4-phospho-D-erythronate + NAD(+) = (R)-3-hydroxy-2-oxo-4-phosphooxybutanoate + NADH + H(+). It participates in cofactor biosynthesis; pyridoxine 5'-phosphate biosynthesis; pyridoxine 5'-phosphate from D-erythrose 4-phosphate: step 2/5. Its function is as follows. Catalyzes the oxidation of erythronate-4-phosphate to 3-hydroxy-2-oxo-4-phosphonooxybutanoate. The chain is Erythronate-4-phosphate dehydrogenase from Shewanella baltica (strain OS195).